The following is a 498-amino-acid chain: WD repeat-containing protein 55 homolog (498 aa).

Residues 1-131 are disordered; sequence MHTHNNFKTP…ATFDLDEDDE (131 aa). Acidic residues-rich tracts occupy residues 12 to 23 and 31 to 48; these read DEDELDDLDEDM and IEQE…EYDL. 2 stretches are compositionally biased toward low complexity: residues 67-82 and 93-103; these read NDSS…NAAD and AGGVTAGGATS. WD repeat units follow at residues 154–193, 198–237, 241–279, 282–321, 324–363, and 408–447; these read KLED…NKLL, VHSK…LKKL, AHDD…AIFE, ELED…MYVQ, PYEE…YHCD, and QHNM…DFGD. Residues 478 to 498 are disordered; it reads DLTKENADGDDDPGAGPSNMA.

This sequence belongs to the WD repeat WDR55 family.

This Drosophila melanogaster (Fruit fly) protein is WD repeat-containing protein 55 homolog.